The following is a 694-amino-acid chain: Elongation factor G (694 aa).

In terms of domain architecture, tr-type G spans 8 to 285 (EKVRNIGIAA…AVVELLPSPQ (278 aa)). GTP-binding positions include 17 to 24 (AHIDAGKT), 81 to 85 (DTPGH), and 135 to 138 (NKMD).

Belongs to the TRAFAC class translation factor GTPase superfamily. Classic translation factor GTPase family. EF-G/EF-2 subfamily.

The protein localises to the cytoplasm. Catalyzes the GTP-dependent ribosomal translocation step during translation elongation. During this step, the ribosome changes from the pre-translocational (PRE) to the post-translocational (POST) state as the newly formed A-site-bound peptidyl-tRNA and P-site-bound deacylated tRNA move to the P and E sites, respectively. Catalyzes the coordinated movement of the two tRNA molecules, the mRNA and conformational changes in the ribosome. This chain is Elongation factor G (fusA), found in Synechococcus sp. (strain ATCC 27144 / PCC 6301 / SAUG 1402/1) (Anacystis nidulans).